The following is a 171-amino-acid chain: Adenine phosphoribosyltransferase (171 aa).

The protein belongs to the purine/pyrimidine phosphoribosyltransferase family. As to quaternary structure, homodimer.

The protein localises to the cytoplasm. It carries out the reaction AMP + diphosphate = 5-phospho-alpha-D-ribose 1-diphosphate + adenine. Its pathway is purine metabolism; AMP biosynthesis via salvage pathway; AMP from adenine: step 1/1. In terms of biological role, catalyzes a salvage reaction resulting in the formation of AMP, that is energically less costly than de novo synthesis. The protein is Adenine phosphoribosyltransferase of Rhodospirillum rubrum (strain ATCC 11170 / ATH 1.1.1 / DSM 467 / LMG 4362 / NCIMB 8255 / S1).